The sequence spans 129 residues: Glycine cleavage system H protein (129 aa).

A Lipoyl-binding domain is found at 24–106; sequence AVRIGLSAYA…HGEGWLLVIQ (83 aa). The residue at position 65 (Lys65) is an N6-lipoyllysine.

It belongs to the GcvH family. The glycine cleavage system is composed of four proteins: P, T, L and H. (R)-lipoate is required as a cofactor.

Its function is as follows. The glycine cleavage system catalyzes the degradation of glycine. The H protein shuttles the methylamine group of glycine from the P protein to the T protein. The protein is Glycine cleavage system H protein of Synechococcus sp. (strain WH7803).